Here is a 270-residue protein sequence, read N- to C-terminus: MLPYPQIDPVAVAIGPLQIHWYGLMYLVGIGGAWLLASRRLNKFDPTWTKEKLSDLIFWLAMGVIVGGRLGYVLFYDLSAYIANPLLIFEVWKGGMAFHGGFVGVMIAAWWFGKRNGKSFFQLMDFVAPLVPIGLGAGRIGNFINAELWGKPTDVPWAMVFPPFSDPAQLARHPSQLYQFALEGVALFIILNLYARKPRPTMAVSGMFALFYGIFRFVVEFVRVPDAQLGYLAWGWVTMGQILSLPMIIAGLFLIWLAYKRDPAASKAAV.

7 helical membrane passes run 10–30, 56–76, 92–112, 120–140, 175–195, 202–222, and 237–257; these read VAVA…LVGI, LIFW…VLFY, WKGG…AWWF, FFQL…AGRI, SQLY…NLYA, MAVS…VEFV, and VTMG…LIWL. Arginine 139 provides a ligand contact to a 1,2-diacyl-sn-glycero-3-phospho-(1'-sn-glycerol).

It belongs to the Lgt family.

It localises to the cell inner membrane. It catalyses the reaction L-cysteinyl-[prolipoprotein] + a 1,2-diacyl-sn-glycero-3-phospho-(1'-sn-glycerol) = an S-1,2-diacyl-sn-glyceryl-L-cysteinyl-[prolipoprotein] + sn-glycerol 1-phosphate + H(+). The protein operates within protein modification; lipoprotein biosynthesis (diacylglyceryl transfer). In terms of biological role, catalyzes the transfer of the diacylglyceryl group from phosphatidylglycerol to the sulfhydryl group of the N-terminal cysteine of a prolipoprotein, the first step in the formation of mature lipoproteins. The polypeptide is Phosphatidylglycerol--prolipoprotein diacylglyceryl transferase (Pseudomonas syringae pv. tomato (strain ATCC BAA-871 / DC3000)).